The sequence spans 863 residues: Potassium/sodium hyperpolarization-activated cyclic nucleotide-gated channel 2 (863 aa).

Over residues 1-10 (MDARGGGGRP) the composition is skewed to gly residues. Residues 1–131 (MDARGGGGRP…AGPAGEPRGS (131 aa)) form a disordered region. Residues 1 to 188 (MDARGGGGRP…PYSDFRFYWD (188 aa)) lie on the Cytoplasmic side of the membrane. Positions 17 to 47 (TPAPGPPPPPPPPAPPQPQPPPAPPPNPTTP) are enriched in pro residues. Residues 106 to 128 (GAASGPAAAEEAGSEEAGPAGEP) are compositionally biased toward low complexity. Residues Ser119 and Ser134 each carry the phosphoserine modification. Positions 131–182 (SQASFLQRQFGALLQPGVNKFSLRMFGSQKAVEREQERVKSAGAWIIHPYSD) are involved in subunit assembly. A helical membrane pass occupies residues 189 to 209 (FTMLLFMVGNLIIIPVGITFF). Over 210-213 (KDET) the chain is Extracellular. Residues 214 to 234 (TAPWIVFNVVSDTFFLMDLVL) form a helical membrane-spanning segment. Residues 235 to 261 (NFRTGIVIEDNTEIILDPEKIKKKYLR) are Cytoplasmic-facing. The chain crosses the membrane as a helical span at residues 262–282 (TWFVVDFVSSIPVDYIFLIVE). The Extracellular segment spans residues 283–290 (KGIDSEVY). Residues 291–311 (KTARALRIVRFTKILSLLRLL) form a helical; Voltage-sensor membrane-spanning segment. At 312–342 (RLSRLIRYIHQWEEIFHMTYDLASAVMRICN) the chain is on the cytoplasmic side. A helical transmembrane segment spans residues 343–363 (LISMMLLLCHWDGCLQFLVPM). The Extracellular portion of the chain corresponds to 364 to 386 (LQDFPSDCWVSINNMVNHSWSEL). Asn380 carries an N-linked (GlcNAc...) asparagine glycan. An intramembrane region (pore-forming) is located at residues 387–408 (YSFALFKAMSHMLCIGYGRQAP). At 409-413 (ESMTD) the chain is on the extracellular side. Residues 414-434 (IWLTMLSMIVGATCYAMFIGH) traverse the membrane as a helical segment. Residues 435–863 (ATALIQSLDS…SARSRLSSNL (429 aa)) lie on the Cytoplasmic side of the membrane. Residues Gly581, Glu582, Cys584, Arg591, Thr592, and Arg632 each coordinate 3',5'-cyclic AMP. A Phosphoserine; by PKG/PRKG2 modification is found at Ser641. The residue at position 726 (Ser726) is a Phosphoserine. Arg728 carries the post-translational modification Omega-N-methylarginine. The interval 730-863 (VRRAPPGPLP…SARSRLSSNL (134 aa)) is disordered. Positions 734 to 755 (PPGPLPPAASPGPPAASPPAAP) are enriched in pro residues. A phosphoserine mark is found at Ser743, Ser750, and Ser757. Composition is skewed to low complexity over residues 756–765 (SSPRAPRTSP) and 778–834 (PALP…AAPS). Phosphoserine is present on residues Ser840, Ser842, and Ser847.

Belongs to the potassium channel HCN family. Homotetramer. The channel is composed of a homo- or heterotetrameric complex of pore-forming subunits. Heterotetramer with HCN1. Forms an obligate 4:4 complex with accessory subunit PEX5L. Interacts with KCNE2. Post-translationally, phosphorylation at Ser-641 by PRKG2 shifts the voltage-dependence to more negative voltages, hence counteracting the stimulatory effect of cGMP on gating. N-glycosylated; required for cell surface trafficking of HCN2. In terms of processing, S-palmitoylated. As to expression, highly expressed in neonatal and adult ventricle and in brain. Highly expressed in the pyramidal layer in hippocampus, in anterior dorsal nucleus in thalamus, in the mammillary nucleus in hypothalamus, in red nucleus, in trigeminal mesencephalic, spinal and principal nuclei, in cochlear and trapezoid nuclei and in the dorsal tegemental nucleus.

The protein localises to the cell membrane. It catalyses the reaction Na(+)(in) = Na(+)(out). The enzyme catalyses K(+)(in) = K(+)(out). The catalysed reaction is NH4(+)(in) = NH4(+)(out). Activated by cAMP, and at 10-100 times higher concentrations, also by cGMP. cAMP binding causes a conformation change that leads to the assembly of an active tetramer and channel opening. In the absence of cAMP, the C-terminal region is thought to exert a tonic inhibition on the pore when HCN2 is in a non-tetrameric form. Channel activity is modulated by intracellular chloride ions and pH; acidic pH shifts the activation to more negative voltages. Phosphatidylinositol-4,5- bisphosphate (PIP(2)) acts as a ligand that allosterically opens HCN2 by shifting voltage-dependent channel activation toward depolarized potentials. Inhibited by extracellular cesium ions. Its function is as follows. Hyperpolarization-activated ion channel exhibiting weak selectivity for potassium over sodium ions. Contributes to the native pacemaker currents in heart (If) and in neurons (Ih). Can also transport ammonium in the distal nephron. Involved in the initiation of neuropathic pain in sensory neurons. Produces a large instantaneous current. This Rattus norvegicus (Rat) protein is Potassium/sodium hyperpolarization-activated cyclic nucleotide-gated channel 2 (Hcn2).